The sequence spans 316 residues: Methionyl-tRNA formyltransferase (316 aa).

109-112 serves as a coordination point for (6S)-5,6,7,8-tetrahydrofolate; that stretch reads SALP.

The protein belongs to the Fmt family.

It carries out the reaction L-methionyl-tRNA(fMet) + (6R)-10-formyltetrahydrofolate = N-formyl-L-methionyl-tRNA(fMet) + (6S)-5,6,7,8-tetrahydrofolate + H(+). Functionally, attaches a formyl group to the free amino group of methionyl-tRNA(fMet). The formyl group appears to play a dual role in the initiator identity of N-formylmethionyl-tRNA by promoting its recognition by IF2 and preventing the misappropriation of this tRNA by the elongation apparatus. In Nocardioides sp. (strain ATCC BAA-499 / JS614), this protein is Methionyl-tRNA formyltransferase.